We begin with the raw amino-acid sequence, 187 residues long: Resolvase OPG149 (187 aa).

Belongs to the RuvC family. Poxviruses-type subfamily. Mg(2+) serves as cofactor.

In terms of biological role, plays a role in DNA replication by cleaving viral DNA concatamers to yield unit-length viral genomes. The concatamer junctions contain inverted repeat sequences that can be extruded as cruciforms, yielding Holliday junctions that A22 protein cleaves. This Variola virus (isolate Human/India/Ind3/1967) (VARV) protein is Resolvase OPG149 (OPG149).